The primary structure comprises 162 residues: Regulator of sigma D (162 aa).

The protein belongs to the Rsd/AlgQ family. In terms of assembly, interacts with RpoD.

The protein resides in the cytoplasm. Functionally, binds RpoD and negatively regulates RpoD-mediated transcription activation by preventing the interaction between the primary sigma factor RpoD with the catalytic core of the RNA polymerase and with promoter DNA. May be involved in replacement of the RNA polymerase sigma subunit from RpoD to RpoS during the transition from exponential growth to the stationary phase. This is Regulator of sigma D from Salmonella agona (strain SL483).